Consider the following 823-residue polypeptide: Ciliated left-right organizer ZP-N domains-containing protein (823 aa).

An N-terminal signal peptide occupies residues 1–22 (MWGSPALAWAVWLACVQPTVFP). 4 disordered regions span residues 206–242 (MGLYVDMNATTVTVQSPRQGLLQRWEVLNTSAELLPL), 269–422 (LVHI…DLLH), 434–520 (GPFL…SPSP), and 632–656 (LPREGARGHMDLSSSEPSQDIEGPG). A compositionally biased stretch (pro residues) spans 216–230 (TVTVQSPRQGLLQRW). Positions 389–402 (GPETPPAGVPPAAS) are enriched in low complexity.

It is found in the secreted. Functionally, plays a role in left-right patterning process. In Homo sapiens (Human), this protein is Ciliated left-right organizer ZP-N domains-containing protein.